A 103-amino-acid chain; its full sequence is uncharacterized protein (103 aa).

This is an uncharacterized protein from Caenorhabditis elegans.